The sequence spans 435 residues: 5-methylthioadenosine/S-adenosylhomocysteine deaminase (435 aa).

Residues His-65 and His-67 each contribute to the Zn(2+) site. The substrate site is built by Glu-94, Arg-150, and His-189. A Zn(2+)-binding site is contributed by His-216. 2 residues coordinate substrate: Glu-219 and Asp-304. Asp-304 is a Zn(2+) binding site.

Belongs to the metallo-dependent hydrolases superfamily. MTA/SAH deaminase family. The cofactor is Zn(2+).

The catalysed reaction is S-adenosyl-L-homocysteine + H2O + H(+) = S-inosyl-L-homocysteine + NH4(+). The enzyme catalyses S-methyl-5'-thioadenosine + H2O + H(+) = S-methyl-5'-thioinosine + NH4(+). Its function is as follows. Catalyzes the deamination of 5-methylthioadenosine and S-adenosyl-L-homocysteine into 5-methylthioinosine and S-inosyl-L-homocysteine, respectively. Is also able to deaminate adenosine. The sequence is that of 5-methylthioadenosine/S-adenosylhomocysteine deaminase from Bacillus cereus (strain G9842).